The following is a 164-amino-acid chain: CB1 cannabinoid receptor-interacting protein 1 (164 aa).

This sequence belongs to the CNRIP family. Interacts with the cannabinoid receptor CNR1 (via C-terminus). Does not interact with cannabinoid receptor CNR2.

Its function is as follows. Suppresses cannabinoid receptor CNR1-mediated tonic inhibition of voltage-gated calcium channels. Does not suppress cannabinoid receptor CNR1-mediated tonic inhibition of voltage-gated calcium channels. The chain is CB1 cannabinoid receptor-interacting protein 1 (CNRIP1) from Homo sapiens (Human).